Here is a 181-residue protein sequence, read N- to C-terminus: Large ribosomal subunit protein uL5 (181 aa).

This sequence belongs to the universal ribosomal protein uL5 family. In terms of assembly, part of the 50S ribosomal subunit; part of the 5S rRNA/L5/L18/L25 subcomplex. Contacts the 5S rRNA and the P site tRNA. Forms a bridge to the 30S subunit in the 70S ribosome.

Its function is as follows. This is one of the proteins that bind and probably mediate the attachment of the 5S RNA into the large ribosomal subunit, where it forms part of the central protuberance. In the 70S ribosome it contacts protein S13 of the 30S subunit (bridge B1b), connecting the 2 subunits; this bridge is implicated in subunit movement. Contacts the P site tRNA; the 5S rRNA and some of its associated proteins might help stabilize positioning of ribosome-bound tRNAs. The polypeptide is Large ribosomal subunit protein uL5 (Helicobacter pylori (strain HPAG1)).